The sequence spans 959 residues: MMS19 nucleotide excision repair protein (959 aa).

HEAT repeat units follow at residues 794 to 828 (QKLFHTIMGKMGSKLANYCVHHLKAFVYVLKATPQ), 832 to 871 (KLNIEQLGPLLFKSLEEHNEAQSLCIALGICEKFVAQQDT), 874 to 915 (QGHL…YPTF), and 918 to 956 (LPHKVDVTLALAAALDDPKRLVRNTAVKARNAWYLVGAP).

This sequence belongs to the MET18/MMS19 family. In terms of assembly, component of the CIA complex. Interacts with Xpd and galla-2. Binds to microtubules. As to expression, expressed in embryos (at protein level).

It localises to the cytoplasm. Its subcellular location is the cytoskeleton. The protein localises to the spindle. It is found in the nucleus. The protein resides in the midbody. Functionally, key component of the cytosolic iron-sulfur protein assembly (CIA) complex, a multiprotein complex that mediates the incorporation of iron-sulfur cluster into apoproteins specifically involved in DNA metabolism and genomic integrity. In the CIA complex, MMS19 acts as an adapter between early-acting CIA components and a subset of cellular target iron-sulfur proteins. Essential for diploid cell cycles, organ growth and development. Regulates mitosis by binding to Xpd and thereby competing with the Xpd-mediated repression on the Cdk-activating kinase (CAK) complex. Regulates the centrosomal localization of the MT regulator tacc, a downstream target of aurA kinase. Binds to microtubules (MT). Regulates spindle and astral MT growth, MT stability and bundling. In neuroblasts, necessary for timely and coordinated spindle assembly and orientation which is necessary for mitotic progression. In young embryos, the maternal protein is important for progression through mitosis. This Drosophila melanogaster (Fruit fly) protein is MMS19 nucleotide excision repair protein.